Reading from the N-terminus, the 292-residue chain is tRNA pseudouridine synthase B (292 aa).

The active-site Nucleophile is D38.

Belongs to the pseudouridine synthase TruB family. Type 1 subfamily.

The enzyme catalyses uridine(55) in tRNA = pseudouridine(55) in tRNA. Functionally, responsible for synthesis of pseudouridine from uracil-55 in the psi GC loop of transfer RNAs. The sequence is that of tRNA pseudouridine synthase B from Gloeobacter violaceus (strain ATCC 29082 / PCC 7421).